The sequence spans 78 residues: Large ribosomal subunit protein bL28 (78 aa).

The disordered stretch occupies residues 1-26; sequence MARVCQVTGKRPMSGHNVSHANNKTK.

This sequence belongs to the bacterial ribosomal protein bL28 family.

This Nitrosomonas europaea (strain ATCC 19718 / CIP 103999 / KCTC 2705 / NBRC 14298) protein is Large ribosomal subunit protein bL28.